The sequence spans 294 residues: DEP domain-containing protein 4 (294 aa).

The DEP domain maps to 71-162 (LQAQVEIKRR…SNISLYRFLG (92 aa)).

This Homo sapiens (Human) protein is DEP domain-containing protein 4 (DEPDC4).